The following is a 441-amino-acid chain: Trigger factor (441 aa).

In terms of domain architecture, PPIase FKBP-type spans 161-246; it reads GDQVTIDFVG…VSEVAEQILP (86 aa).

This sequence belongs to the FKBP-type PPIase family. Tig subfamily.

Its subcellular location is the cytoplasm. The enzyme catalyses [protein]-peptidylproline (omega=180) = [protein]-peptidylproline (omega=0). In terms of biological role, involved in protein export. Acts as a chaperone by maintaining the newly synthesized protein in an open conformation. Functions as a peptidyl-prolyl cis-trans isomerase. This chain is Trigger factor, found in Marinomonas sp. (strain MWYL1).